The sequence spans 807 residues: Sucrose synthase 1 (807 aa).

The interval 272–748 (MMFNVVILSP…GLKRIYEKYT (477 aa)) is GT-B glycosyltransferase.

It belongs to the glycosyltransferase 1 family. Plant sucrose synthase subfamily. In terms of assembly, forms homotetramers. In endosperm it forms both homotetramers and heterotetramers with SS2, all three possible heterotetramers are formed. Highly expressed in developing endosperm and in roots and, at lower levels, in coleoptiles and aleurone. In 3 day old roots it is detected in cap cells and along the vascular strand, starting just after the meristemic region. In 9 day old leaves it is found in the phloem. In seeds it is distributed throughout the endosperm and also found in the assimilate-unloading tissues, the nucellar projection, the vascular area and at a high concentration in the chalazal region.

It carries out the reaction an NDP-alpha-D-glucose + D-fructose = a ribonucleoside 5'-diphosphate + sucrose + H(+). In terms of biological role, sucrose-cleaving enzyme that provides UDP-glucose and fructose for various metabolic pathways. This is Sucrose synthase 1 (SS1) from Hordeum vulgare (Barley).